Consider the following 374-residue polypeptide: Gustatory receptor 23a (374 aa).

Topologically, residues 1-6 (MFPPTR) are cytoplasmic. The chain crosses the membrane as a helical span at residues 7–27 (VQASSRVVLKIFHFILVAFSL). The Extracellular segment spans residues 28–36 (RSRRLSRLV). Residues 37–57 (LWLQFLGWLTWFISMWTQSVI) form a helical membrane-spanning segment. Over 58-72 (YAQTIDCTLDCSLRH) the chain is Cytoplasmic. Residues 73–93 (ILTFFQTVSHAFIVVTSFLDG) form a helical membrane-spanning segment. Residues 94–112 (FRIKQDQLDEPIAFEDSDP) are Extracellular-facing. Residues 113-133 (WLAFTVLAMLVPTLGVEYLVC) traverse the membrane as a helical segment. The Cytoplasmic segment spans residues 134-226 (SNAPEYAFRI…YNDLHYLFVR (93 aa)). Residues 227–247 (INGYFGGSLLTIIIVHFAIFV) traverse the membrane as a helical segment. Residues 248 to 263 (SNSYWLFVDIRTRPWR) are Extracellular-facing. The helical transmembrane segment at 264–284 (IYAILLNLGFIFNVALQMAAA) threads the bilayer. At 285–343 (CWHCQQSYNLGRQIGCLISKLVKPQGSKLYNDLVSEFSLQTLHQRFVVTAKDFFSLNLH) the chain is on the cytoplasmic side. A helical membrane pass occupies residues 344-364 (LLSSMFAAVVTYLVILIQFMF). Residues 365–374 (AERSSTRGSG) lie on the Extracellular side of the membrane.

Belongs to the insect chemoreceptor superfamily. Gustatory receptor (GR) family. Gr2a subfamily. Expressed in the adult labellar chemosensory neurons and labral sense organ. Expressed in neurons of the dorsal pharyngeal sense organ of larvae.

The protein resides in the cell membrane. Its function is as follows. Probable gustatory receptor which mediates acceptance or avoidance behavior, depending on its substrates. This is Gustatory receptor 23a (Gr23a) from Drosophila melanogaster (Fruit fly).